Reading from the N-terminus, the 214-residue chain is 3,4-dihydroxy-2-butanone 4-phosphate synthase (214 aa).

D-ribulose 5-phosphate is bound by residues 37–38, Asp-42, 150–154, and Glu-174; these read RE and RRGHT. Glu-38 lines the Mg(2+) pocket. His-153 contributes to the Mg(2+) binding site.

This sequence belongs to the DHBP synthase family. As to quaternary structure, homodimer. Mg(2+) is required as a cofactor. It depends on Mn(2+) as a cofactor.

It carries out the reaction D-ribulose 5-phosphate = (2S)-2-hydroxy-3-oxobutyl phosphate + formate + H(+). It functions in the pathway cofactor biosynthesis; riboflavin biosynthesis; 2-hydroxy-3-oxobutyl phosphate from D-ribulose 5-phosphate: step 1/1. Catalyzes the conversion of D-ribulose 5-phosphate to formate and 3,4-dihydroxy-2-butanone 4-phosphate. This is 3,4-dihydroxy-2-butanone 4-phosphate synthase from Nitratidesulfovibrio vulgaris (strain ATCC 29579 / DSM 644 / CCUG 34227 / NCIMB 8303 / VKM B-1760 / Hildenborough) (Desulfovibrio vulgaris).